A 173-amino-acid polypeptide reads, in one-letter code: Trafficking regulator of GLUT4 1 (173 aa).

Over residues 1-17 (MANPVQPQLQDPGSTSP) the composition is skewed to polar residues. The tract at residues 1-22 (MANPVQPQLQDPGSTSPLDLPE) is disordered. The Cytoplasmic segment spans residues 1–102 (MANPVQPQLQ…QDQEAPKDYL (102 aa)). 6 positions are modified to phosphoserine: serine 16, serine 43, serine 45, serine 70, serine 84, and serine 85. An intramembrane region (helical) is located at residues 103-123 (VLAIASCFCPVWPLNLIPLIF). The Cytoplasmic segment spans residues 124–150 (SIMSRSSVQQGDLDGARRLGRLARLLS). The chain crosses the membrane as a helical span at residues 151 to 171 (ITFIILGIVIIIVAVTVNFTV). The Extracellular segment spans residues 172–173 (PK).

Belongs to the CD225/Dispanin family. In terms of assembly, interacts with SLC2A4; the interaction is required for proper SLC2A4 reacycling after insulin stimulation. Present in adipose tissue and undetectable in other tissues (at protein level).

Its subcellular location is the cell membrane. It localises to the endomembrane system. The protein localises to the cytoplasm. The protein resides in the perinuclear region. Its function is as follows. Regulates insulin-mediated adipose tissue glucose uptake and transport by modulation of SLC2A4 recycling. Not required for SLC2A4 membrane fusion upon an initial stimulus, but rather is necessary for proper protein recycling during prolonged insulin stimulation. The sequence is that of Trafficking regulator of GLUT4 1 from Rattus norvegicus (Rat).